The sequence spans 294 residues: NAD kinase (294 aa).

D72 acts as the Proton acceptor in catalysis. Residues 72 to 73 (DG), 146 to 147 (ND), R157, R174, D176, 187 to 192 (TAYSLS), and Q247 each bind NAD(+).

It belongs to the NAD kinase family. A divalent metal cation is required as a cofactor.

It localises to the cytoplasm. It catalyses the reaction NAD(+) + ATP = ADP + NADP(+) + H(+). Involved in the regulation of the intracellular balance of NAD and NADP, and is a key enzyme in the biosynthesis of NADP. Catalyzes specifically the phosphorylation on 2'-hydroxyl of the adenosine moiety of NAD to yield NADP. This is NAD kinase from Marinobacter nauticus (strain ATCC 700491 / DSM 11845 / VT8) (Marinobacter aquaeolei).